Here is a 234-residue protein sequence, read N- to C-terminus: uncharacterized protein (234 aa).

Transmembrane regions (helical) follow at residues 28–48, 67–87, 123–143, and 154–174; these read IVII…SIIS, FQIF…FDPI, GGVD…SGTI, and LYCI…GLLY.

The protein belongs to the complex I subunit 2 family.

It localises to the mitochondrion membrane. This is an uncharacterized protein from Neurospora crassa (strain ATCC 24698 / 74-OR23-1A / CBS 708.71 / DSM 1257 / FGSC 987).